The sequence spans 301 residues: GTPase Era (301 aa).

The region spanning 7–175 (YCGFIAIVGR…AAIVRKHLPE (169 aa)) is the Era-type G domain. The segment at 15-22 (GRPNVGKS) is G1. Position 15–22 (15–22 (GRPNVGKS)) interacts with GTP. The interval 41 to 45 (QTTRH) is G2. The G3 stretch occupies residues 62 to 65 (DTPG). Residues 62–66 (DTPGL) and 124–127 (NKVD) contribute to the GTP site. The segment at 124–127 (NKVD) is G4. The G5 stretch occupies residues 154 to 156 (ISA). Positions 206–283 (LGAELPYSVT…HLELWVKVKS (78 aa)) constitute a KH type-2 domain.

The protein belongs to the TRAFAC class TrmE-Era-EngA-EngB-Septin-like GTPase superfamily. Era GTPase family. As to quaternary structure, monomer.

The protein resides in the cytoplasm. It localises to the cell inner membrane. In terms of biological role, an essential GTPase that binds both GDP and GTP, with rapid nucleotide exchange. Plays a role in 16S rRNA processing and 30S ribosomal subunit biogenesis and possibly also in cell cycle regulation and energy metabolism. The protein is GTPase Era of Shigella flexneri.